Consider the following 337-residue polypeptide: Interferon gamma receptor 2 (337 aa).

The signal sequence occupies residues M1–A21. Residues S28–Q247 lie on the Extracellular side of the membrane. The region spanning P31–M129 is the Fibronectin type-III 1 domain. 2 N-linked (GlcNAc...) asparagine glycosylation sites follow: N56 and N85. C86 and C94 are oxidised to a cystine. Residues N110, N137, N219, and N231 are each glycosylated (N-linked (GlcNAc...) asparagine). The region spanning P142–D240 is the Fibronectin type-III 2 domain. C209 and C234 form a disulfide bridge. A helical membrane pass occupies residues V248 to F268. The Cytoplasmic portion of the chain corresponds to L269 to L337. The short motif at L276 to I277 is the Dileucine internalization motif element.

Belongs to the type II cytokine receptor family. Heterodimer with IFNGR1, to form the IFNG receptor complex. Interacts (via intracellular domain) with JAK2. As to expression, expressed in T-cells (at protein level).

It is found in the cell membrane. The protein localises to the cytoplasmic vesicle membrane. The protein resides in the golgi apparatus membrane. It localises to the endoplasmic reticulum membrane. Its subcellular location is the cytoplasm. Associates with IFNGR1 to form a receptor for the cytokine interferon gamma (IFNG). Ligand binding stimulates activation of the JAK/STAT signaling pathway. Required for signal transduction in contrast to other receptor subunit responsible for ligand binding. This Homo sapiens (Human) protein is Interferon gamma receptor 2.